The chain runs to 358 residues: 2'-5'-oligoadenylate synthase 1A (358 aa).

Residues 14-61 form an interaction with dsRNA region; the sequence is DKFIEVYLLPNTSFRDDVKSAINVLCDFLKERCFRDTVHPVRVSKVVK. ATP is bound at residue Ser64. Residues Asp76, Asp78, and Asp149 each contribute to the Mg(2+) site. Residues 201 to 211 are interaction with dsRNA; that stretch reads QRPTKLKSLIR. ATP-binding residues include Arg211, Lys214, and Gln231.

It belongs to the 2-5A synthase family. As to quaternary structure, monomer. Homotetramer. Interacts with OAS1D. It depends on Mg(2+) as a cofactor.

The protein localises to the cytoplasm. The protein resides in the mitochondrion. It localises to the nucleus. It is found in the microsome. Its subcellular location is the endoplasmic reticulum. The enzyme catalyses 3 ATP = 5'-triphosphoadenylyl-(2'-&gt;5')-adenylyl-(2'-&gt;5')-adenosine + 2 diphosphate. Its activity is regulated as follows. Produced as a latent enzyme which is activated by dsRNA generated during the course of viral infection. The dsRNA activator must be at least 15 nucleotides long, and no modification of the 2'-hydroxyl group is tolerated. ssRNA or dsDNA do not act as activators. In terms of biological role, interferon-induced, dsRNA-activated antiviral enzyme which plays a critical role in cellular innate antiviral response. In addition, it may also play a role in other cellular processes such as apoptosis, cell growth, differentiation and gene regulation. Synthesizes higher oligomers of 2'-5'-oligoadenylates (2-5A) from ATP which then bind to the inactive monomeric form of ribonuclease L (RNase L) leading to its dimerization and subsequent activation. Activation of RNase L leads to degradation of cellular as well as viral RNA, resulting in the inhibition of protein synthesis, thus terminating viral replication. Can mediate the antiviral effect via the classical RNase L-dependent pathway or an alternative antiviral pathway independent of RNase L. In Rattus norvegicus (Rat), this protein is 2'-5'-oligoadenylate synthase 1A (Oas1a).